Consider the following 324-residue polypeptide: Histidine N-acetyltransferase (324 aa).

Residues 15-151 enclose the N-acetyltransferase domain; that stretch reads FEFVLAAEKE…GILLLSFNAP (137 aa).

It catalyses the reaction L-histidine + acetyl-CoA = N(alpha)-acetyl-L-histidine + CoA + H(+). Its function is as follows. Enzyme responsible for the N-acetyl-histidine (NAH) synthesis, which is a major constituent of brain and lens of ectothermic vertebrates. This is Histidine N-acetyltransferase (hisat) from Xenopus tropicalis (Western clawed frog).